Reading from the N-terminus, the 362-residue chain is G-protein coupled receptor homolog US27 (362 aa).

Residues 1 to 34 (MTTSTNNQTLTQVSNMTNHTLNSTEIYQLFEYTR) are Virion surface-facing. Residues Asn7, Asn15, Asn18, and Asn22 are each glycosylated (N-linked (GlcNAc...) asparagine; by host). A helical transmembrane segment spans residues 35–58 (LGVWLMCIVGTFLNVLVITTILYY). Residues 59–67 (RRKKKSPSD) lie on the Intravirion side of the membrane. Residues 68–90 (TYICNLAVADLLIVVGLPFFLEY) traverse the membrane as a helical segment. Residues 91–104 (AKHHPKLSREVVCS) lie on the Virion surface side of the membrane. A helical membrane pass occupies residues 105-126 (GLNACFYICLFAGVCFLINLSM). Topologically, residues 127 to 148 (DRYCVIVWGVELNRVRNNKRAT) are intravirion. The chain crosses the membrane as a helical span at residues 149–167 (CWVVIFWILAVLMGMPHYL). Residues 168-193 (MYSHTNNECVGEFANETSGWFPVFLN) are Virion surface-facing. Residues 194-213 (TKVNICGYLAPIALMAYTYN) traverse the membrane as a helical segment. Topologically, residues 214–233 (RMVRFIINYVGKWHMQTLHV) are intravirion. Residues 234–257 (LLVVVVSFASFWFPFNLALFLESI) traverse the membrane as a helical segment. The Virion surface portion of the chain corresponds to 258 to 274 (RLLAGVYNDTLQNVIIF). The chain crosses the membrane as a helical span at residues 275–298 (CLYVGQFLAYVRACLNPGIYILVG). Residues 299–362 (TQMRKDMWTT…MESGEEEFLL (64 aa)) lie on the Intravirion side of the membrane. Residues 341-362 (TKRTHYDRKNAPMESGEEEFLL) are disordered.

This sequence belongs to the G-protein coupled receptor 1 family. As to quaternary structure, heterodimer with US28. Interacts with host Gi alpha-1 subunit GNAI1; this interaction does not lead to the catalytic activation of Gi complex.

It localises to the virion. It is found in the host cell membrane. Interacts with the host Gi complex without activating it, thereby probably interfering with the chemokine-Gi signaling. May also function as a G protein sink to sequester G protein from the cell surface via internalization. Plays an important role in spread of HCMV via the extracellular route. The polypeptide is G-protein coupled receptor homolog US27 (US27) (Homo sapiens (Human)).